The primary structure comprises 322 residues: uncharacterized protein (322 aa).

This is an uncharacterized protein from Acanthamoeba polyphaga mimivirus (APMV).